The sequence spans 863 residues: Chromatin assembly factor 1 subunit A (863 aa).

4 disordered regions span residues 1–353 (MVVV…EEKD), 423–466 (LNGL…PDRS), 513–579 (DSDE…RQRM), and 749–863 (VTRD…PATA). Basic and acidic residues predominate over residues 42 to 54 (LNPEPKECNEPKR). Position 111 is a phosphothreonine (T111). Residue S118 is modified to Phosphoserine. Low complexity predominate over residues 144–154 (SEGTTEPTIPL). Composition is skewed to acidic residues over residues 155-168 (TEEE…EDVD) and 177-196 (QDSD…EQQQ). Low complexity predominate over residues 205–237 (ESVLSTGSTSSASVIASSPEPSKSAPTTPASTS). Composition is skewed to basic and acidic residues over residues 254–353 (QEQE…EEKD) and 457–466 (QKADDGPDRS). Acidic residues-rich tracts occupy residues 513–524 (DSDEEWEEEEPG) and 532–547 (GDDD…DDDG). A compositionally biased stretch (basic and acidic residues) spans 569 to 579 (DPEKQKVRQRM). The segment covering 760-771 (NSPTTNSSTTPS) has biased composition (low complexity). Acidic residues predominate over residues 806–815 (DTEDDEDDDC). Polar residues predominate over residues 821–835 (QSGSSEQDINTSLPQ). Low complexity predominate over residues 850-863 (TAALALPCPTPATA).

Belongs to the CHAF1A family.

The protein resides in the nucleus. Acts as a component of the histone chaperone complex chromatin assembly factor 1 (CAF-1), which assembles histone octamers onto DNA during replication and repair. CAF-1 performs the first step of the nucleosome assembly process, bringing newly synthesized histones H3 and H4 to replicating DNA; histones H2A/H2B can bind to this chromatin precursor subsequent to DNA replication to complete the histone octamer. The protein is Chromatin assembly factor 1 subunit A (chaf1a) of Danio rerio (Zebrafish).